The primary structure comprises 310 residues: tRNA pseudouridine synthase B (310 aa).

The Nucleophile role is filled by D47.

It belongs to the pseudouridine synthase TruB family. Type 1 subfamily.

The enzyme catalyses uridine(55) in tRNA = pseudouridine(55) in tRNA. Responsible for synthesis of pseudouridine from uracil-55 in the psi GC loop of transfer RNAs. The protein is tRNA pseudouridine synthase B of Psychromonas ingrahamii (strain DSM 17664 / CCUG 51855 / 37).